The primary structure comprises 312 residues: Aspartoacylase (312 aa).

Residues H20 and E23 each contribute to the Zn(2+) site. 3 residues coordinate N-acetyl-L-aspartate: R62, N69, and R70. Position 115 (H115) interacts with Zn(2+). N-acetyl-L-aspartate-binding residues include Y163 and R167. E177 (proton donor/acceptor) is an active-site residue. Y287 contributes to the N-acetyl-L-aspartate binding site.

This sequence belongs to the AspA/AstE family. Aspartoacylase subfamily. In terms of assembly, homodimer. Requires Zn(2+) as cofactor.

It is found in the cytoplasm. It localises to the nucleus. It catalyses the reaction an N-acyl-L-aspartate + H2O = a carboxylate + L-aspartate. The enzyme catalyses N-acetyl-L-aspartate + H2O = L-aspartate + acetate. Functionally, catalyzes the deacetylation of N-acetylaspartic acid (NAA) to produce acetate and L-aspartate. NAA occurs in high concentration in brain and its hydrolysis NAA plays a significant part in the maintenance of intact white matter. In other tissues it acts as a scavenger of NAA from body fluids. This chain is Aspartoacylase, found in Mus musculus (Mouse).